The chain runs to 299 residues: Tyrosine recombinase XerD (299 aa).

A Core-binding (CB) domain is found at Glu-2–Leu-89. Residues Arg-110–Ala-293 enclose the Tyr recombinase domain. Catalysis depends on residues Arg-150, Lys-174, His-245, Arg-248, and His-271. The active-site O-(3'-phospho-DNA)-tyrosine intermediate is Tyr-280.

This sequence belongs to the 'phage' integrase family. XerD subfamily. As to quaternary structure, forms a cyclic heterotetrameric complex composed of two molecules of XerC and two molecules of XerD.

It localises to the cytoplasm. Site-specific tyrosine recombinase, which acts by catalyzing the cutting and rejoining of the recombining DNA molecules. The XerC-XerD complex is essential to convert dimers of the bacterial chromosome into monomers to permit their segregation at cell division. It also contributes to the segregational stability of plasmids. This Halalkalibacterium halodurans (strain ATCC BAA-125 / DSM 18197 / FERM 7344 / JCM 9153 / C-125) (Bacillus halodurans) protein is Tyrosine recombinase XerD.